The sequence spans 240 residues: Protein MGARP (240 aa).

Topologically, residues 1 to 40 (MYLRRAVSKTLALPLRAPPNPAPLGKDASLRRMSSNRFPG) are cytoplasmic. The chain crosses the membrane as a helical; Anchor for type IV membrane protein span at residues 41 to 63 (SSGSNMIYYLVVGVTVSAGGYYA). Over 64 to 240 (YKTVTSDQAK…VGSEAASAQG (177 aa)) the chain is Mitochondrial intermembrane. Residues 166 to 240 (RETTEVNPET…VGSEAASAQG (75 aa)) form a disordered region. The span at 170–181 (EVNPETTPEVTN) shows a compositional bias: low complexity. Residues 191–201 (DNDKDTTKNET) are compositionally biased toward basic and acidic residues. The span at 202–213 (SDEYAELEEENS) shows a compositional bias: acidic residues. Residues 228–240 (EASVGSEAASAQG) are compositionally biased toward low complexity.

In terms of assembly, interacts with RHOT1/Miro-1, TRAK1/OIP106 and TRAK2/GRIF1. Interacts with RHOT2/Miro-2. In terms of tissue distribution, expressed in the brain, adrenal gland and corneal endothelium (CE). Expressed in steroid-producing cells of the ovary and testis (at protein level). Expressed in steroid-producing cells of the ovary and testis. Weakly expressed in placenta. Expressed in corneal endothelial cells.

The protein localises to the mitochondrion. Its subcellular location is the mitochondrion outer membrane. It localises to the mitochondrion inner membrane. Plays a role in the trafficking of mitochondria along microtubules. Regulates the kinesin-mediated axonal transport of mitochondria to nerve terminals along microtubules during hypoxia. Participates in the translocation of TRAK2/GRIF1 from the cytoplasm to the mitochondrion. Also plays a role in steroidogenesis through maintenance of mitochondrial abundance and morphology. Plays an inhibitory role during neocortex development by regulating mitochondrial morphology, distribution and motility in neocortical neurons. The sequence is that of Protein MGARP (MGARP) from Homo sapiens (Human).